We begin with the raw amino-acid sequence, 586 residues long: A-type ATP synthase subunit A (586 aa).

232–239 (GPFGSGKT) provides a ligand contact to ATP.

It belongs to the ATPase alpha/beta chains family. In terms of assembly, has multiple subunits with at least A(3), B(3), C, D, E, F, H, I and proteolipid K(x).

The protein resides in the cell membrane. It catalyses the reaction ATP + H2O + 4 H(+)(in) = ADP + phosphate + 5 H(+)(out). Functionally, component of the A-type ATP synthase that produces ATP from ADP in the presence of a proton gradient across the membrane. The A chain is the catalytic subunit. In Methanococcus maripaludis (strain DSM 14266 / JCM 13030 / NBRC 101832 / S2 / LL), this protein is A-type ATP synthase subunit A.